Consider the following 205-residue polypeptide: Thymidylate kinase (205 aa).

10–17 is an ATP binding site; sequence GIDGAGKS.

It belongs to the thymidylate kinase family.

It catalyses the reaction dTMP + ATP = dTDP + ADP. In terms of biological role, phosphorylation of dTMP to form dTDP in both de novo and salvage pathways of dTTP synthesis. The chain is Thymidylate kinase from Ralstonia pickettii (strain 12J).